A 207-amino-acid chain; its full sequence is Fibronectin type III domain-containing protein 5b (207 aa).

The signal sequence occupies residues 1-26 (MWGIKGSFAVLLLLFLAYIFASSVNA). At 27–146 (DSLSAPLNVT…EEVGQAAQLR (120 aa)) the chain is on the extracellular side. The Fibronectin type-III domain maps to 31–122 (APLNVTIKAL…EPVLFRTPKE (92 aa)). N-linked (GlcNAc...) asparagine glycans are attached at residues asparagine 34 and asparagine 79. Residues 147–167 (AGELIIIVVVLVMWAGVIALF) form a helical membrane-spanning segment. Residues 168-207 (CRQYDIIKDNEPNNNKDKAKNSSECSTPEHPTGGLLRSKV) lie on the Cytoplasmic side of the membrane. Residues 178-188 (EPNNNKDKAKN) are compositionally biased toward basic and acidic residues. The tract at residues 178–207 (EPNNNKDKAKNSSECSTPEHPTGGLLRSKV) is disordered. Positions 205–207 (SKV) match the Microbody targeting signal motif.

In terms of assembly, dimer; may exist in other oligomeric forms. Post-translationally, the extracellular domain is cleaved and released from the cell membrane.

The protein localises to the cell membrane. It localises to the peroxisome membrane. The protein resides in the secreted. May mediate beneficial effects of muscular exercise. The sequence is that of Fibronectin type III domain-containing protein 5b (fndc5b) from Danio rerio (Zebrafish).